The sequence spans 324 residues: MGYEKFTWVIKNFSSLQSKYINSDKFVIGGCKWFLKGYQNANYLSLFLMVATSKTLPCGWRRYTRFRLTVVNQLSDELSQQRETETWFDQNVVLSGNRHMISLTKLNAKKGGFLVNNEVKIVVEVDVLQVIGKLDVSEGSQEVTQPLKRIRLNDDGVSVKQSIDVNGFQVLPSQVESVKRIFERHPNMALEFRAKNQHVRTSCMNVLLSLIDTLCQSLQDISIDDLGQAEKALRYLKDSDFKVDWLERKLEEVKEKKMEEQIGKSRMQELEEELKIFKQKCSDIEAQLEKEKQKCSDIEALLEKEKAKSLAAARAPPLTLDDVV.

The 123-residue stretch at 3-125 (YEKFTWVIKN…NNEVKIVVEV (123 aa)) folds into the MATH domain. A coiled-coil region spans residues 241-309 (FKVDWLERKL…ALLEKEKAKS (69 aa)).

The protein is MATH domain and coiled-coil domain-containing protein At3g44790 of Arabidopsis thaliana (Mouse-ear cress).